The following is a 419-amino-acid chain: UDP-N-acetylglucosamine 1-carboxyvinyltransferase (419 aa).

A phosphoenolpyruvate-binding site is contributed by 22 to 23 (KN). Position 93 (Arg93) interacts with UDP-N-acetyl-alpha-D-glucosamine. The Proton donor role is filled by Cys117. Cys117 bears the 2-(S-cysteinyl)pyruvic acid O-phosphothioketal mark. UDP-N-acetyl-alpha-D-glucosamine-binding residues include Asp306 and Val328.

This sequence belongs to the EPSP synthase family. MurA subfamily.

The protein resides in the cytoplasm. The catalysed reaction is phosphoenolpyruvate + UDP-N-acetyl-alpha-D-glucosamine = UDP-N-acetyl-3-O-(1-carboxyvinyl)-alpha-D-glucosamine + phosphate. It functions in the pathway cell wall biogenesis; peptidoglycan biosynthesis. Cell wall formation. Adds enolpyruvyl to UDP-N-acetylglucosamine. This chain is UDP-N-acetylglucosamine 1-carboxyvinyltransferase, found in Thioalkalivibrio sulfidiphilus (strain HL-EbGR7).